An 89-amino-acid chain; its full sequence is Small ribosomal subunit protein uS17 (89 aa).

The protein belongs to the universal ribosomal protein uS17 family. Part of the 30S ribosomal subunit.

One of the primary rRNA binding proteins, it binds specifically to the 5'-end of 16S ribosomal RNA. The protein is Small ribosomal subunit protein uS17 of Xanthomonas campestris pv. campestris (strain 8004).